A 217-amino-acid polypeptide reads, in one-letter code: Small ribosomal subunit protein uS3 (217 aa).

A KH type-2 domain is found at 38 to 106 (IRNFIKKELA…QVHINIIEIK (69 aa)).

Belongs to the universal ribosomal protein uS3 family. Part of the 30S ribosomal subunit. Forms a tight complex with proteins S10 and S14.

Functionally, binds the lower part of the 30S subunit head. Binds mRNA in the 70S ribosome, positioning it for translation. The sequence is that of Small ribosomal subunit protein uS3 from Streptococcus suis (strain 98HAH33).